The primary structure comprises 143 residues: 3-dehydroquinate dehydratase (143 aa).

The active-site Proton acceptor is Tyr22. 3 residues coordinate substrate: Asn73, His79, and Asp86. The active-site Proton donor is the His99. Substrate-binding positions include 100 to 101 and Arg110; that span reads LS.

It belongs to the type-II 3-dehydroquinase family. In terms of assembly, homododecamer.

The enzyme catalyses 3-dehydroquinate = 3-dehydroshikimate + H2O. Its pathway is metabolic intermediate biosynthesis; chorismate biosynthesis; chorismate from D-erythrose 4-phosphate and phosphoenolpyruvate: step 3/7. Its function is as follows. Catalyzes a trans-dehydration via an enolate intermediate. The polypeptide is 3-dehydroquinate dehydratase (Salinispora tropica (strain ATCC BAA-916 / DSM 44818 / JCM 13857 / NBRC 105044 / CNB-440)).